Consider the following 141-residue polypeptide: Nucleoside diphosphate kinase (141 aa).

The ATP site is built by lysine 11, phenylalanine 59, arginine 87, threonine 93, arginine 104, and asparagine 114. Histidine 117 functions as the Pros-phosphohistidine intermediate in the catalytic mechanism.

This sequence belongs to the NDK family. Homotetramer. The cofactor is Mg(2+).

It is found in the cytoplasm. The enzyme catalyses a 2'-deoxyribonucleoside 5'-diphosphate + ATP = a 2'-deoxyribonucleoside 5'-triphosphate + ADP. It catalyses the reaction a ribonucleoside 5'-diphosphate + ATP = a ribonucleoside 5'-triphosphate + ADP. Its function is as follows. Major role in the synthesis of nucleoside triphosphates other than ATP. The ATP gamma phosphate is transferred to the NDP beta phosphate via a ping-pong mechanism, using a phosphorylated active-site intermediate. This is Nucleoside diphosphate kinase from Xanthomonas axonopodis pv. citri (strain 306).